We begin with the raw amino-acid sequence, 174 residues long: Small ribosomal subunit protein uS4 (174 aa).

Residues 105 to 169 form the S4 RNA-binding domain; sequence RRLQTVAYRK…SPLADDLHPE (65 aa).

The protein belongs to the universal ribosomal protein uS4 family. Part of the 30S ribosomal subunit. Contacts protein S5. The interaction surface between S4 and S5 is involved in control of translational fidelity.

One of the primary rRNA binding proteins, it binds directly to 16S rRNA where it nucleates assembly of the body of the 30S subunit. Its function is as follows. With S5 and S12 plays an important role in translational accuracy. This is Small ribosomal subunit protein uS4 from Natronomonas pharaonis (strain ATCC 35678 / DSM 2160 / CIP 103997 / JCM 8858 / NBRC 14720 / NCIMB 2260 / Gabara) (Halobacterium pharaonis).